The following is a 185-amino-acid chain: UPF0397 protein CPR_1556 (185 aa).

Transmembrane regions (helical) follow at residues 11–31 (IVAI…GSLP), 44–64 (AFLS…IGFI), 71–91 (IVFF…VGLI), 111–131 (IFMF…LVAP), and 149–169 (GVIG…VLIS).

The protein belongs to the UPF0397 family.

The protein localises to the cell membrane. The protein is UPF0397 protein CPR_1556 of Clostridium perfringens (strain SM101 / Type A).